The sequence spans 329 residues: DNA-directed RNA polymerase subunit alpha (329 aa).

The interval 1-231 is alpha N-terminal domain (alpha-NTD); sequence MQTNLLKPKT…EQLAVFAQLE (231 aa). Residues 249–329 are alpha C-terminal domain (alpha-CTD); sequence FDPILLRPVD…SWPPAGLDKR (81 aa).

Belongs to the RNA polymerase alpha chain family. Homodimer. The RNAP catalytic core consists of 2 alpha, 1 beta, 1 beta' and 1 omega subunit. When a sigma factor is associated with the core the holoenzyme is formed, which can initiate transcription.

It catalyses the reaction RNA(n) + a ribonucleoside 5'-triphosphate = RNA(n+1) + diphosphate. Functionally, DNA-dependent RNA polymerase catalyzes the transcription of DNA into RNA using the four ribonucleoside triphosphates as substrates. This chain is DNA-directed RNA polymerase subunit alpha, found in Polaromonas sp. (strain JS666 / ATCC BAA-500).